The chain runs to 143 residues: MKIKIIKLTESAQVPRYSHADDAGLDLFAIEAQKILPGASALIPTGIAIELPQGTEAQVRPRSGLALKHSITVLNSPGTIDAGYRGEIGVILINHGQETFQVVEGMKIAQMVIAPIMRAEIEEVTELSATQRGEGGFGSTGYA.

Residues 62–64 (RSG), asparagine 75, and 79–81 (TID) each bind substrate.

This sequence belongs to the dUTPase family. It depends on Mg(2+) as a cofactor.

The enzyme catalyses dUTP + H2O = dUMP + diphosphate + H(+). The protein operates within pyrimidine metabolism; dUMP biosynthesis; dUMP from dCTP (dUTP route): step 2/2. In terms of biological role, this enzyme is involved in nucleotide metabolism: it produces dUMP, the immediate precursor of thymidine nucleotides and it decreases the intracellular concentration of dUTP so that uracil cannot be incorporated into DNA. The sequence is that of Deoxyuridine 5'-triphosphate nucleotidohydrolase from Acaryochloris marina (strain MBIC 11017).